Reading from the N-terminus, the 465-residue chain is UDP-N-acetylmuramoylalanine--D-glutamate ligase (465 aa).

Residue 127 to 133 (GSNGKST) participates in ATP binding.

This sequence belongs to the MurCDEF family.

The protein localises to the cytoplasm. The enzyme catalyses UDP-N-acetyl-alpha-D-muramoyl-L-alanine + D-glutamate + ATP = UDP-N-acetyl-alpha-D-muramoyl-L-alanyl-D-glutamate + ADP + phosphate + H(+). Its pathway is cell wall biogenesis; peptidoglycan biosynthesis. Its function is as follows. Cell wall formation. Catalyzes the addition of glutamate to the nucleotide precursor UDP-N-acetylmuramoyl-L-alanine (UMA). This Cereibacter sphaeroides (strain ATCC 17023 / DSM 158 / JCM 6121 / CCUG 31486 / LMG 2827 / NBRC 12203 / NCIMB 8253 / ATH 2.4.1.) (Rhodobacter sphaeroides) protein is UDP-N-acetylmuramoylalanine--D-glutamate ligase.